Here is a 331-residue protein sequence, read N- to C-terminus: GTP 3',8-cyclase (331 aa).

One can recognise a Radical SAM core domain in the interval 9 to 233; sequence PFGRRITYLR…VRSSKVTGGP (225 aa). A GTP-binding site is contributed by Arg-18. Positions 25 and 29 each coordinate [4Fe-4S] cluster. An S-adenosyl-L-methionine-binding site is contributed by Tyr-31. [4Fe-4S] cluster is bound at residue Cys-32. Residue Arg-67 coordinates GTP. Gly-71 contributes to the S-adenosyl-L-methionine binding site. Residue Thr-98 coordinates GTP. Residue Ser-122 participates in S-adenosyl-L-methionine binding. Lys-159 provides a ligand contact to GTP. Residue Met-193 coordinates S-adenosyl-L-methionine. Positions 257 and 260 each coordinate [4Fe-4S] cluster. 262-264 contacts GTP; the sequence is RVR. Residue Cys-274 participates in [4Fe-4S] cluster binding.

The protein belongs to the radical SAM superfamily. MoaA family. As to quaternary structure, monomer and homodimer. [4Fe-4S] cluster serves as cofactor.

It carries out the reaction GTP + AH2 + S-adenosyl-L-methionine = (8S)-3',8-cyclo-7,8-dihydroguanosine 5'-triphosphate + 5'-deoxyadenosine + L-methionine + A + H(+). Its pathway is cofactor biosynthesis; molybdopterin biosynthesis. Catalyzes the cyclization of GTP to (8S)-3',8-cyclo-7,8-dihydroguanosine 5'-triphosphate. In Ectopseudomonas mendocina (strain ymp) (Pseudomonas mendocina), this protein is GTP 3',8-cyclase.